A 225-amino-acid chain; its full sequence is Glucosyl-3-phosphoglycerate phosphatase (225 aa).

R10 is a substrate binding site. The active-site Tele-phosphohistidine intermediate is the H11. R60 provides a ligand contact to substrate. E84 serves as the catalytic Proton donor/acceptor. H158 is a binding site for substrate.

It belongs to the phosphoglycerate mutase family. In terms of assembly, homodimer.

It carries out the reaction (2R)-2-O-(alpha-D-glucopyranosyl)-3-phospho-glycerate + H2O = (2R)-2-O-(alpha-D-glucopyranosyl)-glycerate + phosphate. Involved in the biosynthesis of mycobacterial methylglucose lipopolysaccharides (MGLP). Catalyzes the dephosphorylation of glucosyl-3-phosphoglycerate (GPG) to glucosylglycerate. The chain is Glucosyl-3-phosphoglycerate phosphatase from Mycolicibacterium vanbaalenii (strain DSM 7251 / JCM 13017 / BCRC 16820 / KCTC 9966 / NRRL B-24157 / PYR-1) (Mycobacterium vanbaalenii).